Consider the following 664-residue polypeptide: Transketolase 1 (664 aa).

H26 contacts substrate. Residues H66 and 114 to 116 (GPL) contribute to the thiamine diphosphate site. D155 is a binding site for Mg(2+). Residues G156 and N185 each coordinate thiamine diphosphate. The Mg(2+) site is built by N185 and I187. H260, R357, and S384 together coordinate substrate. Residue H260 participates in thiamine diphosphate binding. The Proton donor role is filled by E411. F437 contacts thiamine diphosphate. Residues H461, D469, and R520 each coordinate substrate.

It belongs to the transketolase family. As to quaternary structure, homodimer. Mg(2+) serves as cofactor. Requires Ca(2+) as cofactor. It depends on Mn(2+) as a cofactor. Co(2+) is required as a cofactor. The cofactor is thiamine diphosphate.

It catalyses the reaction D-sedoheptulose 7-phosphate + D-glyceraldehyde 3-phosphate = aldehydo-D-ribose 5-phosphate + D-xylulose 5-phosphate. Catalyzes the transfer of a two-carbon ketol group from a ketose donor to an aldose acceptor, via a covalent intermediate with the cofactor thiamine pyrophosphate. This Vibrio parahaemolyticus serotype O3:K6 (strain RIMD 2210633) protein is Transketolase 1 (tkt1).